A 360-amino-acid polypeptide reads, in one-letter code: Cyclin-D1-binding protein 1 (360 aa).

Position 2 is an N-acetylalanine (Ala2). Interaction with TCF3 stretches follow at residues 2 to 184 and 150 to 360; these read ASAT…VDFV and ISYN…ELEL. Interaction with RPLP0 regions lie at residues 2–190 and 240–360; these read ASAT…AHEE and LIIP…ELEL. A required for interaction with CCND1 region spans residues 2–208; that stretch reads ASATAPAAAV…DPYSGLLNDT (207 aa).

It belongs to the CCNDBP1 family. As to quaternary structure, interacts with CCND1 and GRAP2. May also interact with COPS5, RPLP0, SIRT6, SYF2 and TCF3. Post-translationally, phosphorylated.

It localises to the cytoplasm. The protein resides in the nucleus. In terms of biological role, may negatively regulate cell cycle progression. May act at least in part via inhibition of the cyclin-D1/CDK4 complex, thereby preventing phosphorylation of RB1 and blocking E2F-dependent transcription. The protein is Cyclin-D1-binding protein 1 (CCNDBP1) of Pongo abelii (Sumatran orangutan).